The sequence spans 225 residues: C-reactive protein (225 aa).

The first 19 residues, methionine 1–glycine 19, serve as a signal peptide directing secretion. In terms of domain architecture, Pentraxin (PTX) spans phenylalanine 24 to serine 225. A disulfide bond links cysteine 55 and cysteine 116. Ca(2+) contacts are provided by asparagine 80, glutamate 157, glutamine 158, aspartate 159, and glutamine 169.

It belongs to the pentraxin family. Homopentamer. Pentraxin (or pentaxin) have a discoid arrangement of 5 non-covalently bound subunits. Interacts with FCN1; may regulate monocyte activation by FCN1. It depends on Ca(2+) as a cofactor. In terms of tissue distribution, found in plasma.

The protein resides in the secreted. In terms of biological role, displays several functions associated with host defense: it promotes agglutination, bacterial capsular swelling, phagocytosis and complement fixation through its calcium-dependent binding to phosphorylcholine. Can interact with DNA and histones and may scavenge nuclear material released from damaged circulating cells. The sequence is that of C-reactive protein (Crp) from Mus musculus (Mouse).